The primary structure comprises 127 residues: MALKACITVIAVVYVVQVVRGAEKSLDSDSSGEDYELWTQGCPFLVAENRTGFGTTVSCQHNCNGAIEKVPEGEPCYTIGEDGLGRMKLNLPYNCSLGECSGGVCVPNGRSDVCFKRTWEENNKAMA.

The N-terminal stretch at 1 to 21 (MALKACITVIAVVYVVQVVRG) is a signal peptide. 4 cysteine pairs are disulfide-bonded: C42-C63, C59-C100, C76-C105, and C95-C114. Residues N49 and N94 are each glycosylated (N-linked (GlcNAc...) asparagine).

It is found in the secreted. In terms of biological role, salivary chemokine-binding protein which binds to host chemokines CCL1, CCL2, CCL3 and CCL5. The chain is Evasin P467 from Rhipicephalus pulchellus (Yellow backed tick).